A 305-amino-acid polypeptide reads, in one-letter code: Probable 5-dehydro-4-deoxyglucarate dehydratase (305 aa).

This sequence belongs to the DapA family.

The catalysed reaction is 5-dehydro-4-deoxy-D-glucarate + H(+) = 2,5-dioxopentanoate + CO2 + H2O. It participates in carbohydrate acid metabolism; D-glucarate degradation; 2,5-dioxopentanoate from D-glucarate: step 2/2. This is Probable 5-dehydro-4-deoxyglucarate dehydratase from Pseudomonas entomophila (strain L48).